The sequence spans 368 residues: Protein mab-21-like (368 aa).

The protein belongs to the mab-21 family.

The sequence is that of Protein mab-21-like from Drosophila melanogaster (Fruit fly).